The following is a 246-amino-acid chain: Uridylate kinase (246 aa).

20 to 23 (KISG) contacts ATP. The involved in allosteric activation by GTP stretch occupies residues 28-33 (GDQGYG). A UMP-binding site is contributed by Gly62. The ATP site is built by Gly63 and Arg67. Residues Asp82 and 143 to 150 (TGNPYFTT) contribute to the UMP site. ATP is bound by residues Thr170, Tyr176, and Asp179.

It belongs to the UMP kinase family. In terms of assembly, homohexamer.

It localises to the cytoplasm. The enzyme catalyses UMP + ATP = UDP + ADP. It functions in the pathway pyrimidine metabolism; CTP biosynthesis via de novo pathway; UDP from UMP (UMPK route): step 1/1. With respect to regulation, allosterically activated by GTP. Inhibited by UTP. In terms of biological role, catalyzes the reversible phosphorylation of UMP to UDP. The protein is Uridylate kinase of Cereibacter sphaeroides (strain ATCC 17029 / ATH 2.4.9) (Rhodobacter sphaeroides).